Consider the following 1070-residue polypeptide: DNA-directed RNA polymerase subunit beta (1070 aa).

The protein belongs to the RNA polymerase beta chain family. In terms of assembly, in plastids the minimal PEP RNA polymerase catalytic core is composed of four subunits: alpha, beta, beta', and beta''. When a (nuclear-encoded) sigma factor is associated with the core the holoenzyme is formed, which can initiate transcription.

It localises to the plastid. Its subcellular location is the chloroplast. The enzyme catalyses RNA(n) + a ribonucleoside 5'-triphosphate = RNA(n+1) + diphosphate. DNA-dependent RNA polymerase catalyzes the transcription of DNA into RNA using the four ribonucleoside triphosphates as substrates. The sequence is that of DNA-directed RNA polymerase subunit beta from Solanum bulbocastanum (Wild potato).